The following is a 392-amino-acid chain: Na(+)/H(+) antiporter NhaA (392 aa).

A run of 11 helical transmembrane segments spans residues 14–34 (AGGL…NSPL), 59–79 (LLLW…GLEV), 95–115 (IFPA…YLLF), 125–145 (GWAI…ALLG), 154–174 (VFLL…IALF), 179–199 (VSLQ…YMNW), 213–233 (LVLW…GVIV), 254–274 (GLHP…NAGV), 287–307 (LLPL…IFLF), 328–348 (IFAV…IASL), and 363–383 (LGIL…LRLA).

It belongs to the NhaA Na(+)/H(+) (TC 2.A.33) antiporter family.

Its subcellular location is the cell inner membrane. It carries out the reaction Na(+)(in) + 2 H(+)(out) = Na(+)(out) + 2 H(+)(in). Na(+)/H(+) antiporter that extrudes sodium in exchange for external protons. This is Na(+)/H(+) antiporter NhaA from Yersinia enterocolitica serotype O:8 / biotype 1B (strain NCTC 13174 / 8081).